Here is a 145-residue protein sequence, read N- to C-terminus: Basic phospholipase A2 PC17 (145 aa).

Residues 1–21 (MYPAHLLVLLAVCVSLLGASA) form the signal peptide. A propeptide spanning residues 22-27 (ISNQPR) is cleaved from the precursor. Cystine bridges form between C38-C98, C54-C144, C56-C72, C71-C125, C78-C118, C87-C111, and C105-C116. Residues Y55, G57, and G59 each coordinate Ca(2+). The active site involves H75. Ca(2+) is bound at residue D76. D119 is an active-site residue.

The protein belongs to the phospholipase A2 family. Group I subfamily. D49 sub-subfamily. It depends on Ca(2+) as a cofactor. As to expression, expressed by the venom gland.

It localises to the secreted. It catalyses the reaction a 1,2-diacyl-sn-glycero-3-phosphocholine + H2O = a 1-acyl-sn-glycero-3-phosphocholine + a fatty acid + H(+). Its function is as follows. Snake venom phospholipase A2 (PLA2) that inhibits neuromuscular transmission by blocking acetylcholine release from the nerve termini. PLA2 catalyzes the calcium-dependent hydrolysis of the 2-acyl groups in 3-sn-phosphoglycerides. In Laticauda colubrina (Yellow-lipped sea krait), this protein is Basic phospholipase A2 PC17.